Here is a 355-residue protein sequence, read N- to C-terminus: Chorismate synthase (355 aa).

Positions 44 and 49 each coordinate NADP(+). FMN contacts are provided by residues 121-123 (HFS), Gly277, 292-296 (KPTPS), and Arg319.

It belongs to the chorismate synthase family. FMNH2 is required as a cofactor.

The enzyme catalyses 5-O-(1-carboxyvinyl)-3-phosphoshikimate = chorismate + phosphate. Its pathway is metabolic intermediate biosynthesis; chorismate biosynthesis; chorismate from D-erythrose 4-phosphate and phosphoenolpyruvate: step 7/7. Catalyzes the anti-1,4-elimination of the C-3 phosphate and the C-6 proR hydrogen from 5-enolpyruvylshikimate-3-phosphate (EPSP) to yield chorismate, which is the branch point compound that serves as the starting substrate for the three terminal pathways of aromatic amino acid biosynthesis. This reaction introduces a second double bond into the aromatic ring system. The protein is Chorismate synthase of Thermococcus kodakarensis (strain ATCC BAA-918 / JCM 12380 / KOD1) (Pyrococcus kodakaraensis (strain KOD1)).